The chain runs to 234 residues: Probable glycerol uptake facilitator protein (234 aa).

The next 2 membrane-spanning stretches (helical) occupy residues 3–23 (VYLA…GVVA) and 36–56 (GWIV…YLVG). The short motif at 64–66 (NPA) is the NPA 1 element. The next 3 membrane-spanning stretches (helical) occupy residues 82-102 (VPGY…LVYL), 134-154 (LLTE…IGAN), and 164-184 (LVGF…GYAI). The short motif at 185-187 (NPA) is the NPA 2 element. Residues 214-234 (VPIIGPIIGGILGASLYNWLF) traverse the membrane as a helical segment.

It belongs to the MIP/aquaporin (TC 1.A.8) family.

It is found in the cell membrane. The enzyme catalyses glycerol(in) = glycerol(out). In terms of biological role, mediates glycerol diffusion across the cytoplasmic membrane via a pore-type mechanism. This Thermotoga maritima (strain ATCC 43589 / DSM 3109 / JCM 10099 / NBRC 100826 / MSB8) protein is Probable glycerol uptake facilitator protein (glpF).